The chain runs to 184 residues: Oligoribonuclease (184 aa).

The 162-residue stretch at 8 to 169 (LIWIDLEMTG…EDIHESIIEL (162 aa)) folds into the Exonuclease domain. Tyrosine 129 is a catalytic residue.

The protein belongs to the oligoribonuclease family.

The protein localises to the cytoplasm. 3'-to-5' exoribonuclease specific for small oligoribonucleotides. The sequence is that of Oligoribonuclease from Buchnera aphidicola subsp. Schizaphis graminum (strain Sg).